A 276-amino-acid chain; its full sequence is Secretagogin (276 aa).

EF-hand domains lie at 12 to 47 (LDAACFWQIWQRFDKDEKGYIKETELDAFFDDLLAK), 105 to 140 (DNSVEFMQIWRKYDADSSGFISAAELSNFLRDLFLH), 149 to 184 (ELEEYTSTMEKIFDRNKDGRLDLNDLARILALQENF), 197 to 232 (ERKRDFEKIFAHYDVSKTGALEGPEVDGFVKDMMEL), and 240 to 276 (VDLDKFREILLRHCDVNKDGKIQKSELALCLGLKINP). Ca(2+) contacts are provided by Asp-118, Asp-120, Ser-122, Glu-129, Asp-162, Asn-164, Asp-166, Arg-168, Asp-173, Asp-210, Ser-212, Thr-214, Glu-221, Asp-254, Asn-256, Asp-258, Lys-260, and Glu-265.

In terms of tissue distribution, highly expressed in pancreas, in particular in pancreatic islets and pancreatic beta-cells. Detected in prostate, adrenal gland, small intestine, stomach and thyroid (at protein level).

The protein resides in the cytoplasm. It localises to the secreted. The protein localises to the cytoplasmic vesicle. It is found in the secretory vesicle membrane. The sequence is that of Secretagogin (Scgn) from Rattus norvegicus (Rat).